The following is a 356-amino-acid chain: Probable dual-specificity RNA methyltransferase RlmN (356 aa).

Glutamate 100 (proton acceptor) is an active-site residue. The Radical SAM core domain occupies 106 to 340; sequence TQQRLTVCLS…VSLRASRGLD (235 aa). A disulfide bridge links cysteine 113 with cysteine 345. [4Fe-4S] cluster-binding residues include cysteine 120, cysteine 124, and cysteine 127. S-adenosyl-L-methionine-binding positions include 167-168, serine 197, 226-228, and asparagine 302; these read GE and SLH. The S-methylcysteine intermediate role is filled by cysteine 345.

This sequence belongs to the radical SAM superfamily. RlmN family. [4Fe-4S] cluster is required as a cofactor.

It localises to the cytoplasm. It carries out the reaction adenosine(2503) in 23S rRNA + 2 reduced [2Fe-2S]-[ferredoxin] + 2 S-adenosyl-L-methionine = 2-methyladenosine(2503) in 23S rRNA + 5'-deoxyadenosine + L-methionine + 2 oxidized [2Fe-2S]-[ferredoxin] + S-adenosyl-L-homocysteine. The enzyme catalyses adenosine(37) in tRNA + 2 reduced [2Fe-2S]-[ferredoxin] + 2 S-adenosyl-L-methionine = 2-methyladenosine(37) in tRNA + 5'-deoxyadenosine + L-methionine + 2 oxidized [2Fe-2S]-[ferredoxin] + S-adenosyl-L-homocysteine. Functionally, specifically methylates position 2 of adenine 2503 in 23S rRNA and position 2 of adenine 37 in tRNAs. The chain is Probable dual-specificity RNA methyltransferase RlmN from Prochlorococcus marinus (strain MIT 9303).